Here is a 267-residue protein sequence, read N- to C-terminus: Regulatory protein RecX (267 aa).

This sequence belongs to the RecX family.

It localises to the cytoplasm. Modulates RecA activity. This chain is Regulatory protein RecX, found in Leuconostoc mesenteroides subsp. mesenteroides (strain ATCC 8293 / DSM 20343 / BCRC 11652 / CCM 1803 / JCM 6124 / NCDO 523 / NBRC 100496 / NCIMB 8023 / NCTC 12954 / NRRL B-1118 / 37Y).